The sequence spans 273 residues: Ribosomal RNA small subunit methyltransferase A (273 aa).

6 residues coordinate S-adenosyl-L-methionine: asparagine 18, leucine 20, glycine 45, glutamate 66, aspartate 91, and asparagine 113.

The protein belongs to the class I-like SAM-binding methyltransferase superfamily. rRNA adenine N(6)-methyltransferase family. RsmA subfamily.

Its subcellular location is the cytoplasm. The catalysed reaction is adenosine(1518)/adenosine(1519) in 16S rRNA + 4 S-adenosyl-L-methionine = N(6)-dimethyladenosine(1518)/N(6)-dimethyladenosine(1519) in 16S rRNA + 4 S-adenosyl-L-homocysteine + 4 H(+). In terms of biological role, specifically dimethylates two adjacent adenosines (A1518 and A1519) in the loop of a conserved hairpin near the 3'-end of 16S rRNA in the 30S particle. May play a critical role in biogenesis of 30S subunits. In Shigella flexneri, this protein is Ribosomal RNA small subunit methyltransferase A.